A 391-amino-acid chain; its full sequence is S-adenosylmethionine synthase (391 aa).

ATP is bound at residue histidine 19. Residue aspartate 21 coordinates Mg(2+). Glutamate 47 serves as a coordination point for K(+). L-methionine is bound by residues glutamate 60 and glutamine 103. The interval glutamine 103 to arginine 113 is flexible loop. ATP is bound by residues aspartate 168–lysine 170, arginine 236–phenylalanine 237, aspartate 245, arginine 251–lysine 252, alanine 268, and lysine 272. Aspartate 245 is an L-methionine binding site. Lysine 276 serves as a coordination point for L-methionine.

The protein belongs to the AdoMet synthase family. Homotetramer; dimer of dimers. It depends on Mg(2+) as a cofactor. K(+) serves as cofactor.

It is found in the cytoplasm. It carries out the reaction L-methionine + ATP + H2O = S-adenosyl-L-methionine + phosphate + diphosphate. It participates in amino-acid biosynthesis; S-adenosyl-L-methionine biosynthesis; S-adenosyl-L-methionine from L-methionine: step 1/1. Its function is as follows. Catalyzes the formation of S-adenosylmethionine (AdoMet) from methionine and ATP. The overall synthetic reaction is composed of two sequential steps, AdoMet formation and the subsequent tripolyphosphate hydrolysis which occurs prior to release of AdoMet from the enzyme. This chain is S-adenosylmethionine synthase, found in Oleidesulfovibrio alaskensis (strain ATCC BAA-1058 / DSM 17464 / G20) (Desulfovibrio alaskensis).